The primary structure comprises 187 residues: Threonylcarbamoyl-AMP synthase (187 aa).

The YrdC-like domain occupies 3–187 (EVLPADVAEL…AKSGQVIRKG (185 aa)).

The protein belongs to the SUA5 family. TsaC subfamily.

It localises to the cytoplasm. The catalysed reaction is L-threonine + hydrogencarbonate + ATP = L-threonylcarbamoyladenylate + diphosphate + H2O. Required for the formation of a threonylcarbamoyl group on adenosine at position 37 (t(6)A37) in tRNAs that read codons beginning with adenine. Catalyzes the conversion of L-threonine, HCO(3)(-)/CO(2) and ATP to give threonylcarbamoyl-AMP (TC-AMP) as the acyladenylate intermediate, with the release of diphosphate. The sequence is that of Threonylcarbamoyl-AMP synthase from Shewanella halifaxensis (strain HAW-EB4).